The sequence spans 186 residues: ATP-dependent protease subunit HslV (186 aa).

Residue T14 is part of the active site. Na(+) is bound by residues A168, C171, and T174.

It belongs to the peptidase T1B family. HslV subfamily. As to quaternary structure, a double ring-shaped homohexamer of HslV is capped on each side by a ring-shaped HslU homohexamer. The assembly of the HslU/HslV complex is dependent on binding of ATP.

The protein resides in the cytoplasm. The enzyme catalyses ATP-dependent cleavage of peptide bonds with broad specificity.. With respect to regulation, allosterically activated by HslU binding. Protease subunit of a proteasome-like degradation complex believed to be a general protein degrading machinery. The sequence is that of ATP-dependent protease subunit HslV from Methylorubrum extorquens (strain CM4 / NCIMB 13688) (Methylobacterium extorquens).